A 240-amino-acid polypeptide reads, in one-letter code: Ubiquinone biosynthesis O-methyltransferase (240 aa).

S-adenosyl-L-methionine contacts are provided by Arg44, Gly64, Asp85, and Met129.

Belongs to the methyltransferase superfamily. UbiG/COQ3 family.

The catalysed reaction is a 3-demethylubiquinol + S-adenosyl-L-methionine = a ubiquinol + S-adenosyl-L-homocysteine + H(+). It carries out the reaction a 3-(all-trans-polyprenyl)benzene-1,2-diol + S-adenosyl-L-methionine = a 2-methoxy-6-(all-trans-polyprenyl)phenol + S-adenosyl-L-homocysteine + H(+). It participates in cofactor biosynthesis; ubiquinone biosynthesis. In terms of biological role, O-methyltransferase that catalyzes the 2 O-methylation steps in the ubiquinone biosynthetic pathway. In Escherichia coli (strain SMS-3-5 / SECEC), this protein is Ubiquinone biosynthesis O-methyltransferase.